We begin with the raw amino-acid sequence, 170 residues long: Transcriptional repressor NrdR (170 aa).

Residues 3 to 34 (CPFCRHPDSRVVDSRTTDDGTSIRRRRQCPDC) fold into a zinc finger. Positions 46–136 (LMVVKRSGVT…VYRAFDSLED (91 aa)) constitute an ATP-cone domain. A disordered region spans residues 148-170 (RPSAEDRGSGETLEVPAPAIAAD).

This sequence belongs to the NrdR family. The cofactor is Zn(2+).

In terms of biological role, negatively regulates transcription of bacterial ribonucleotide reductase nrd genes and operons by binding to NrdR-boxes. The polypeptide is Transcriptional repressor NrdR (Streptomyces griseus subsp. griseus (strain JCM 4626 / CBS 651.72 / NBRC 13350 / KCC S-0626 / ISP 5235)).